We begin with the raw amino-acid sequence, 988 residues long: MSTPGIGGDFQLFSPLESTRRISQGNSLSVDQSSTDVASQDWTQWMRWDDEQAFPETANASPSSPFDLAFISPSASSGREASDAMHKDFSPDISLDFKSPSLGFFPGGDLNTNVSPQPDHVGAGSLSVHSNSPLSSIGASRKRKTGSDDDGSTMTSMFKAKQAPSKKRAHNVIEKRYRANLNEKIAELRDSVPSLRASYKQANGNSGDDDDDGVTSASKLNKASILSKATEYIRHLEIRNKRLEEENTALKIRLRQLDKAADQIVTSAASVSSPSDCTVSTESGASSSPSVFSHAEDVPSDHSPTSSHPPEGLIKVPDAWKRMRAAGSNESPYSQSYIQYKKTDSHSSQSGGGRMRSHLPNKYMLGALAGLMVLEGLGTEKKTESTAKGLLAVPLNLLNRVQLPSEVYSSAAFQYFWSSWHARAISHFLMLAILVVGSAFIVFVYLFNSDPRRQYSASKVAPDVTLSSCNFRRQAWLTSIQRVGVPRHRFFHEWYVVTSRCFEYVLRCLLGWKLYSLVTGVTEEDEKGRVKTWDIAIDAQLAGGDAEISKSRLVLTIFAAGTLPRSPMRMMLKALHCRILMWRVGEPGSWTFNVSNDVARSLARYQWDLARKMNAALPKDHPDSLPSHLATLLKIDCDDVMIDTIIQRAANLTWNRPTQEGTDDDEALLDVVEEDPAIQSSLDALAAWWSSHLLQGALLRYFEASSGGPDAKKSRNVFKSKIKLALDVAPQPSAAHTRALVMMAVFFERDRVANIGSVLAALPKEKGKNKQNQASNFLDSSLPISVREEISTAVRCAMIAAIFNARATGDTSLPATFTVEKAIHWFNRLPLDPVELTLLEFAAVYHLLHILASDIDYLASSDSSAPPSPMSKASDMLSSSSDDGEDGASQRNNNIIPHPMPNLGRVASELIYWARNAYNPAFYGFTSNLVKVIETECTSLCQTAGVHVADYSCVQEEKSKAKQAIDSKRRFAGGNEEASDNLLLSDES.

The Cytoplasmic segment spans residues 1–427 (MSTPGIGGDF…SSWHARAISH (427 aa)). Disordered regions lie at residues 53–85 (AFPE…SDAM) and 108–169 (GDLN…KKRA). A compositionally biased stretch (low complexity) spans 125-136 (SLSVHSNSPLSS). The tract at residues 165–178 (SKKRAHNVIEKRYR) is basic motif. Positions 165-236 (SKKRAHNVIE…SKATEYIRHL (72 aa)) constitute a bHLH domain. Positions 179-236 (ANLNEKIAELRDSVPSLRASYKQANGNSGDDDDDGVTSASKLNKASILSKATEYIRHL) are helix-loop-helix motif. Residues 226–260 (LSKATEYIRHLEIRNKRLEEENTALKIRLRQLDKA) adopt a coiled-coil conformation. Over residues 267–291 (SAASVSSPSDCTVSTESGASSSPSV) the composition is skewed to polar residues. The tract at residues 267–313 (SAASVSSPSDCTVSTESGASSSPSVFSHAEDVPSDHSPTSSHPPEGL) is disordered. Over residues 301–310 (DHSPTSSHPP) the composition is skewed to low complexity. A helical membrane pass occupies residues 428–447 (FLMLAILVVGSAFIVFVYLF). The Lumenal portion of the chain corresponds to 448-988 (NSDPRRQYSA…SDNLLLSDES (541 aa)). The span at 866 to 881 (PPSPMSKASDMLSSSS) shows a compositional bias: low complexity. The segment at 866-900 (PPSPMSKASDMLSSSSDDGEDGASQRNNNIIPHPM) is disordered.

In terms of processing, in low oxygen or sterol conditions, undergoes proteolytic cleavage by rhomboid-type protease rbdB and is released as soluble transcription factor from the membrane.

It localises to the endoplasmic reticulum membrane. The protein resides in the nucleus. Precursor of the transcription factor srbA, which is embedded in the endoplasmic reticulum membrane. Low oxygen or sterol conditions promote processing of this form, releasing the transcription factor form that translocates into the nucleus and activates transcription of genes required for adaptation to anaerobic growth. In terms of biological role, transcription factor that regulates sterol biosynthesis and hyphal morphology. Plays a critical role in ergosterol biosynthesis, resistance to the azole class of antifungal drugs, and in maintenance of cell polarity. Directly binds erg11A/cyp51A upstream DNA sequence at tandem repeats, called TR34 and TR46, that produce duplicated binding sites. Also mediates regulation of iron acquisition in response to hypoxia and low iron conditions via activation of extra- and intracellular siderophore production. Positively regulates the expression of the other hypoxia adaptation key transcription factor srbB. Required for the azole-sensing and response to azole stress. Binds the high-affinity sites 5'-A-T-C-G/A-T/G-A/G-C/T-G/C-A-T-3' of target promoters. Required for virulence in murine models of invasive pulmonary aspergillosis (IPA). The sequence is that of Transcription regulator srbA precursor from Aspergillus fumigatus (strain ATCC MYA-4609 / CBS 101355 / FGSC A1100 / Af293) (Neosartorya fumigata).